The following is a 365-amino-acid chain: Histidinol-phosphate aminotransferase 2 (365 aa).

At Lys-221 the chain carries N6-(pyridoxal phosphate)lysine.

It belongs to the class-II pyridoxal-phosphate-dependent aminotransferase family. Histidinol-phosphate aminotransferase subfamily. Homodimer. Pyridoxal 5'-phosphate serves as cofactor.

The catalysed reaction is L-histidinol phosphate + 2-oxoglutarate = 3-(imidazol-4-yl)-2-oxopropyl phosphate + L-glutamate. It functions in the pathway amino-acid biosynthesis; L-histidine biosynthesis; L-histidine from 5-phospho-alpha-D-ribose 1-diphosphate: step 7/9. In Bradyrhizobium diazoefficiens (strain JCM 10833 / BCRC 13528 / IAM 13628 / NBRC 14792 / USDA 110), this protein is Histidinol-phosphate aminotransferase 2 (hisC2).